Reading from the N-terminus, the 221-residue chain is Endo-1,4-beta-xylanase 2 (221 aa).

The signal sequence occupies residues 1–19; sequence MVAFTSLLAGFAAIAGVLS. The GH11 domain occupies 32 to 221; that stretch reads QTIGPGTGYS…SSGSASITVS (190 aa). Asn-69 and Asn-92 each carry an N-linked (GlcNAc...) asparagine glycan. Catalysis depends on Glu-117, which acts as the Nucleophile. Catalysis depends on Glu-208, which acts as the Proton donor.

The protein belongs to the glycosyl hydrolase 11 (cellulase G) family.

The protein resides in the secreted. The catalysed reaction is Endohydrolysis of (1-&gt;4)-beta-D-xylosidic linkages in xylans.. The protein operates within glycan degradation; xylan degradation. Its function is as follows. Endo-1,4-beta-xylanase involved in the hydrolysis of xylan, a major structural heterogeneous polysaccharide found in plant biomass representing the second most abundant polysaccharide in the biosphere, after cellulose. The chain is Endo-1,4-beta-xylanase 2 (Xyn2) from Trichoderma harzianum (Hypocrea lixii).